Here is a 297-residue protein sequence, read N- to C-terminus: Adrenocorticotropic hormone receptor (297 aa).

The Extracellular portion of the chain corresponds to 1–23 (MKHIIHASGNVNGTARNNSDCPH). Asn12 and Asn17 each carry an N-linked (GlcNAc...) asparagine glycan. Cystine bridges form between Cys21–Cys253 and Cys245–Cys251. The helical transmembrane segment at 24 to 49 (VALPEEIFFIISITGVLENLIIILAV) threads the bilayer. At 50-58 (IKNKNLQFP) the chain is on the cytoplasmic side. Residues 59–79 (MYFFICSLAISDMLGSLYKIL) traverse the membrane as a helical segment. Residues 80–104 (ESILIMFRNMGYFKPHGSFETTTDD) lie on the Extracellular side of the membrane. The chain crosses the membrane as a helical span at residues 105-126 (IIDTMFILSLLGSIFSLLAIAV). Topologically, residues 127 to 147 (DRYITIFHALQYHSIVTMHRT) are cytoplasmic. Residues 148-168 (IAVLSIIWTFCIGSGITMVLF) traverse the membrane as a helical segment. Over 169 to 180 (SHHVPTVLTFTS) the chain is Extracellular. Residues 181–199 (LFPLMLVFILCLYVHMFLM) traverse the membrane as a helical segment. Residues 200-217 (ARSHARNISTLPRGNMRG) lie on the Cytoplasmic side of the membrane. A helical transmembrane segment spans residues 218–244 (AITLTILLGVFIFCWAPFILHILLVTF). Topologically, residues 245 to 256 (CPNNPYCTCYIS) are extracellular. The chain crosses the membrane as a helical span at residues 257–278 (LFHVNGMLIMCNAVIDPFIYAF). The Cytoplasmic portion of the chain corresponds to 279–297 (RSPELRSAFRRMISYSKCL). The S-palmitoyl cysteine moiety is linked to residue Cys296.

This sequence belongs to the G-protein coupled receptor 1 family. Homodimer. Interacts with corticotropin (ACTH). Interacts with MRAP; this interaction targets MC2R to the plasma membrane. Interacts with MRAP2; competing with MRAP for binding to MC2R and impairing the binding of corticotropin (ACTH). Post-translationally, ubiquitinated by MGRN1 that may be involved in post-endocytic trafficking and/or degradation of internalized receptor.

Its subcellular location is the cell membrane. In terms of biological role, hormone receptor primarily expressed in adrenal cortex that plays a key role in regulating adrenocortical function. Upon corticotropin (ACTH) binding, facilitates the release of adrenal glucocorticoids, including cortisol and corticosterone. In addition, MC2R is required for fetal and neonatal adrenal gland development. Mechanistically, activates adenylate cyclase (cAMP), the MAPK cascade as well as the cAMP-dependent protein kinase A pathway leading to steroidogenic factor 1/NR5A1-mediated transcriptional activation. The protein is Adrenocorticotropic hormone receptor (MC2R) of Cavia porcellus (Guinea pig).